The primary structure comprises 417 residues: NADH-quinone oxidoreductase subunit D (417 aa).

It belongs to the complex I 49 kDa subunit family. As to quaternary structure, NDH-1 is composed of 14 different subunits. Subunits NuoB, C, D, E, F, and G constitute the peripheral sector of the complex.

The protein localises to the cell inner membrane. It catalyses the reaction a quinone + NADH + 5 H(+)(in) = a quinol + NAD(+) + 4 H(+)(out). NDH-1 shuttles electrons from NADH, via FMN and iron-sulfur (Fe-S) centers, to quinones in the respiratory chain. The immediate electron acceptor for the enzyme in this species is believed to be ubiquinone. Couples the redox reaction to proton translocation (for every two electrons transferred, four hydrogen ions are translocated across the cytoplasmic membrane), and thus conserves the redox energy in a proton gradient. This Francisella tularensis subsp. novicida (strain U112) protein is NADH-quinone oxidoreductase subunit D.